Here is a 304-residue protein sequence, read N- to C-terminus: MAEQDLLKTLGQLITEQRNPNSMQIDTLSAYEIVQIINNEDKQVPLAIEKVLPQIAQAVEKIVEAFQQGGRLVYIGAGTSGRLGVLDASECPPTFGVSPEMVKGIIAGGERALRHPIEGAEDNKEAGKQDLQAVEFSPKDVLVGIAASGRTPYVLGALAYAKELGAITVSIASNPNSAMSQIADIVIDTVVGAEVLTGSSRMKSGTAQKLVLNMLTTASMILIGKCYQNLMVDVQASNQKLVARAIRIVMQATECSREIAETTLALAENNAKLAIMMILADLDKDGAEQLLSQQQGKISRYTIV.

Residues 62 to 225 (IVEAFQQGGR…TTASMILIGK (164 aa)) enclose the SIS domain. Glutamate 90 functions as the Proton donor in the catalytic mechanism. The active site involves glutamate 121.

It belongs to the GCKR-like family. MurNAc-6-P etherase subfamily. Homodimer.

It catalyses the reaction N-acetyl-D-muramate 6-phosphate + H2O = N-acetyl-D-glucosamine 6-phosphate + (R)-lactate. Its pathway is amino-sugar metabolism; 1,6-anhydro-N-acetylmuramate degradation. It functions in the pathway amino-sugar metabolism; N-acetylmuramate degradation. It participates in cell wall biogenesis; peptidoglycan recycling. Functionally, specifically catalyzes the cleavage of the D-lactyl ether substituent of MurNAc 6-phosphate, producing GlcNAc 6-phosphate and D-lactate. Together with AnmK, is also required for the utilization of anhydro-N-acetylmuramic acid (anhMurNAc) either imported from the medium or derived from its own cell wall murein, and thus plays a role in cell wall recycling. The chain is N-acetylmuramic acid 6-phosphate etherase from Glaesserella parasuis serovar 5 (strain SH0165) (Haemophilus parasuis).